The chain runs to 112 residues: Nucleoid-associated protein FTF0810c (112 aa).

Residues 1–27 are disordered; that stretch reads MNFDMSKLMQQAQKMQEQMKKAQQERE. Positions 17-27 are enriched in basic and acidic residues; sequence EQMKKAQQERE.

This sequence belongs to the YbaB/EbfC family. In terms of assembly, homodimer.

The protein localises to the cytoplasm. Its subcellular location is the nucleoid. Binds to DNA and alters its conformation. May be involved in regulation of gene expression, nucleoid organization and DNA protection. The polypeptide is Nucleoid-associated protein FTF0810c (Francisella tularensis subsp. tularensis (strain FSC 198)).